The sequence spans 469 residues: 3-isopropylmalate dehydratase large subunit (469 aa).

Positions 347, 407, and 410 each coordinate [4Fe-4S] cluster.

Belongs to the aconitase/IPM isomerase family. LeuC type 1 subfamily. Heterodimer of LeuC and LeuD. [4Fe-4S] cluster serves as cofactor.

It catalyses the reaction (2R,3S)-3-isopropylmalate = (2S)-2-isopropylmalate. Its pathway is amino-acid biosynthesis; L-leucine biosynthesis; L-leucine from 3-methyl-2-oxobutanoate: step 2/4. Functionally, catalyzes the isomerization between 2-isopropylmalate and 3-isopropylmalate, via the formation of 2-isopropylmaleate. The protein is 3-isopropylmalate dehydratase large subunit of Prochlorococcus marinus (strain NATL1A).